Reading from the N-terminus, the 66-residue chain is Large ribosomal subunit protein bL31 (66 aa).

C16, C18, C36, and C39 together coordinate Zn(2+).

The protein belongs to the bacterial ribosomal protein bL31 family. Type A subfamily. As to quaternary structure, part of the 50S ribosomal subunit. It depends on Zn(2+) as a cofactor.

Binds the 23S rRNA. The chain is Large ribosomal subunit protein bL31 from Geobacillus thermodenitrificans (strain NG80-2).